Consider the following 334-residue polypeptide: Cathepsin J (334 aa).

A signal peptide spans 1–17 (MTPAVFLVILCFGVASG). A propeptide spans 18–113 (APARDPNLDA…PSAQKQVSIG (96 aa)) (activation peptide). Residue C138 is part of the active site. Residues N217, N221, and N268 are each glycosylated (N-linked (GlcNAc...) asparagine). Residues C269 and C322 are joined by a disulfide bond. The active site involves H276. N-linked (GlcNAc...) asparagine glycosylation is present at N288. N300 is a catalytic residue.

This sequence belongs to the peptidase C1 family. In terms of tissue distribution, expressed specifically in placenta.

The protein localises to the lysosome. This chain is Cathepsin J (Ctsj), found in Rattus norvegicus (Rat).